We begin with the raw amino-acid sequence, 188 residues long: Elongation factor P (188 aa).

Lysine 34 bears the N6-(3,6-diaminohexanoyl)-5-hydroxylysine mark.

The protein belongs to the elongation factor P family. Post-translationally, may be beta-lysylated on the epsilon-amino group of Lys-34 by the combined action of EpmA and EpmB, and then hydroxylated on the C5 position of the same residue by EpmC (if this protein is present). Lysylation is critical for the stimulatory effect of EF-P on peptide-bond formation. The lysylation moiety may extend toward the peptidyltransferase center and stabilize the terminal 3-CCA end of the tRNA. Hydroxylation of the C5 position on Lys-34 may allow additional potential stabilizing hydrogen-bond interactions with the P-tRNA.

Its subcellular location is the cytoplasm. Its pathway is protein biosynthesis; polypeptide chain elongation. Functionally, involved in peptide bond synthesis. Alleviates ribosome stalling that occurs when 3 or more consecutive Pro residues or the sequence PPG is present in a protein, possibly by augmenting the peptidyl transferase activity of the ribosome. Modification of Lys-34 is required for alleviation. This Stenotrophomonas maltophilia (strain K279a) protein is Elongation factor P.